Here is a 236-residue protein sequence, read N- to C-terminus: Sugar fermentation stimulation protein homolog (236 aa).

Belongs to the SfsA family.

The polypeptide is Sugar fermentation stimulation protein homolog (Synechococcus elongatus (strain ATCC 33912 / PCC 7942 / FACHB-805) (Anacystis nidulans R2)).